The chain runs to 448 residues: MSPIDALFLSAESREHPLHVGALQLFEPPAGAGRGFVRETYQAMLQCREIAPLFRKRPTSLHGALINLGWSTDADVDLGYHARRSALPAPGRVRELLELTSRLHSNLLDRHRPLWETHVIEGLRDGRFAIYSKMHHALVDGVSGLTLMRQPMTTDPIEGKLRTAWSPATQHTAIKRRRGRLQQLGGMLGSVAGLAPSTLRLARSALIEQQLTLPFGAPHTMLNVAVGGARRCAAQSWPLDRVKAVKDAAGVSLNDVVLAMCAGALREYLDDNDALPDTPLVAMVPVSLRTDRDSVGGNMVGAVLCNLATHLDDPADRLNAIHASMRGNKNVLSQLPRAQALAVSLLLLSPAALNTLPGLAKATPPPFNVCISNVPGAREPLYFNGARMVGNYPMSLVLDGQALNITLTSTADSLDFGVVGCRRSVPHVQRVLSHLETSLKELERAVGL.

Residue histidine 136 is the Proton acceptor of the active site.

It belongs to the long-chain O-acyltransferase family.

It carries out the reaction an acyl-CoA + a 1,2-diacyl-sn-glycerol = a triacyl-sn-glycerol + CoA. It functions in the pathway glycerolipid metabolism; triacylglycerol biosynthesis. In Mycobacterium tuberculosis (strain CDC 1551 / Oshkosh), this protein is Putative diacyglycerol O-acyltransferase MT3848.